A 497-amino-acid chain; its full sequence is tRNA (adenine(58)-N(1))-methyltransferase non-catalytic subunit TRM6 (497 aa).

A disordered region spans residues 69 to 102 (TNGGSLQPKKKKEEPTSETKEAGTDNRNIIDDGK). Positions 79 to 102 (KKEEPTSETKEAGTDNRNIIDDGK) are enriched in basic and acidic residues. The interval 94 to 104 (NRNIIDDGKSQ) is substrate. Residue threonine 107 is modified to Phosphothreonine. Substrate regions lie at residues 145-154 (KYIKKKKKKY) and 175-182 (REPGKINH). Residues 276–354 (SSEPKDIASV…EKQRRQEEQK (79 aa)) are disordered. A phosphoserine mark is found at serine 298 and serine 305. Over residues 311–354 (ESNHPEEQERMEIVSQDPDYKEPKESGSKKDYIQEKQRRQEEQK) the composition is skewed to basic and acidic residues. Substrate-binding residues include arginine 349 and arginine 377. Substrate stretches follow at residues 415–423 (RERGGVINL) and 434–441 (QVLPDRSH). A disordered region spans residues 468 to 497 (PSLKSSTSTLESHKTEEPAAKKRKCPESDS). The span at 478 to 497 (ESHKTEEPAAKKRKCPESDS) shows a compositional bias: basic and acidic residues.

This sequence belongs to the TRM6/GCD10 family. In terms of assembly, heterotetramer; composed of two copies of TRMT6 and two copies of TRMT61A.

The protein resides in the nucleus. Functionally, substrate-binding subunit of tRNA (adenine-N(1)-)-methyltransferase, which catalyzes the formation of N(1)-methyladenine at position 58 (m1A58) in initiator methionyl-tRNA. Together with the TRMT61A catalytic subunit, part of a mRNA N(1)-methyltransferase complex that mediates methylation of adenosine residues at the N(1) position of a small subset of mRNAs: N(1) methylation takes place in tRNA T-loop-like structures of mRNAs and is only present at low stoichiometries. The sequence is that of tRNA (adenine(58)-N(1))-methyltransferase non-catalytic subunit TRM6 (TRMT6) from Bos taurus (Bovine).